Consider the following 504-residue polypeptide: Facilitated trehalose transporter Tret1 (504 aa).

At 1-39 (MELNNKEDSPRHTVPFVRQITEDGKAKLEIYRPTTNPIY) the chain is on the cytoplasmic side. The chain crosses the membrane as a helical span at residues 40–60 (IYTQILAAIAVSMGSMVVGFA). Residues 61–87 (SAYTSPALVSMQNTTITSFKVTEQEAS) are Extracellular-facing. The N-linked (GlcNAc...) asparagine glycan is linked to N73. Residues 88-108 (WVGGIMPLAGLAGGIAGGPFI) form a helical membrane-spanning segment. At 109–120 (EYLGRKNTILAT) the chain is on the cytoplasmic side. A helical membrane pass occupies residues 121 to 141 (AVPFIVAWLLIAFANSIWMVL). Over 142-145 (AGRA) the chain is Extracellular. The chain crosses the membrane as a helical span at residues 146–166 (LSGFCVGIASLSLPVYLGETV). At 167-171 (QPEVR) the chain is on the cytoplasmic side. A helical transmembrane segment spans residues 172-192 (GTLGLLPTAFGNIGILICFVA). Over 193–199 (GKYVNWS) the chain is Extracellular. A glycan (N-linked (GlcNAc...) asparagine) is linked at N197. The chain crosses the membrane as a helical span at residues 200 to 220 (GLAFIGSILPIPFMVLTLLIP). Over 221–283 (ETPRWFVTRG…DLMKRSNLKP (63 aa)) the chain is Cytoplasmic. The helical transmembrane segment at 284 to 304 (LLIALGLMFFQQLSGINAVIF) threads the bilayer. Residues 305-320 (YTVSIFKDAGSTIDEN) are Extracellular-facing. A helical membrane pass occupies residues 321–341 (LCTIIVGVVNFGATFFATVLI). Over 342-347 (DRLGRK) the chain is Cytoplasmic. The chain crosses the membrane as a helical span at residues 348 to 368 (ILLYISEVAMVITLLTLGTFF). Over 369–387 (YYKNSGNDVSNIGWLPLAS) the chain is Extracellular. Residues 388 to 408 (FVIYVIGFSSGVGPIPWLMLG) form a helical membrane-spanning segment. The Cytoplasmic segment spans residues 409 to 424 (EILPGKIRGSAASVAT). Residues 425-445 (GFNWTCTFIVTKTFADIVAAI) form a helical membrane-spanning segment. At 446 to 448 (GNH) the chain is on the extracellular side. The helical transmembrane segment at 449–469 (GAFWFFGVICLIGLFFVIFFV) threads the bilayer. Over 470–504 (PETQGKSLEEIERKMMGRVRRMSSVANMKPLSFNM) the chain is Cytoplasmic.

This sequence belongs to the major facilitator superfamily. Sugar transporter (TC 2.A.1.1) family. Trehalose transporter subfamily. In terms of tissue distribution, highest expression in the fat body. Not expressed in other tissues including the midgut, muscle, and integuments after 24 hours of dehydration.

The protein localises to the cell membrane. Functionally, high-capacity facilitative transporter for trehalose, required to induce anhydrobiosis. Anhydrobiotic larvae can survive almost complete dehydration. Does not transport maltose, sucrose or lactose. Mediates the bidirectional transfer of trehalose. Responsible for the transport of trehalose synthesized in the fat body and the incorporation of trehalose into other tissues that require a carbon source, thereby regulating trehalose levels in the hemolymph. The sequence is that of Facilitated trehalose transporter Tret1 from Polypedilum vanderplanki (Sleeping chironomid midge).